The primary structure comprises 79 residues: Small ribosomal subunit protein bS16 (79 aa).

The protein belongs to the bacterial ribosomal protein bS16 family.

The protein is Small ribosomal subunit protein bS16 of Buchnera aphidicola subsp. Acyrthosiphon pisum (strain 5A).